The primary structure comprises 271 residues: Transmembrane protein 150A (271 aa).

The Cytoplasmic portion of the chain corresponds to 1–2 (MT). A helical transmembrane segment spans residues 3-23 (AWILLPVSLSAFSITGIWTVY). Topologically, residues 24–75 (AMAVMNRHVCPVENWSYNESCSPDPAEQGGPKSCCTLDDVPLISKCGTYPPE) are extracellular. N-linked (GlcNAc...) asparagine glycosylation is found at Asn37 and Asn41. Residues 76–96 (SCLFSLIGNMGAVMVALICLL) traverse the membrane as a helical segment. Residues 97–108 (RYGQLLEQSRHS) lie on the Cytoplasmic side of the membrane. The chain crosses the membrane as a helical span at residues 109–129 (WINTTALITGCTNAAGLVVVG). The Extracellular portion of the chain corresponds to 130–140 (NFQVDHAKSLH). Residues 141–161 (YIGTGVAFTAGLLFVCLHCVL) traverse the membrane as a helical segment. The Cytoplasmic portion of the chain corresponds to 162 to 178 (FYHGATTPLDMAMAYLR). A helical transmembrane segment spans residues 179 to 199 (SVLAVIAFITLVLSGVFFLHE). The Extracellular portion of the chain corresponds to 200–211 (SSQLQHGAALCE). Residues 212–232 (WVFVLDILIFYGTFSYEFGTI) form a helical membrane-spanning segment. Residues 233 to 271 (SSDTLVAALQPAPGRACKSSGSSSTSTHLNCAPESIAMI) are Cytoplasmic-facing.

Belongs to the DRAM/TMEM150 family. In terms of assembly, interacts (via C-terminal cytoplasmic tail) with PI4KA.

The protein localises to the cell membrane. Regulates localization of phosphatidylinositol 4-kinase (PI4K) to the plasma membrane, possibly by reducing the association of TTC7 (TTC7A or TTC7B) with the PI4K complex. Acts as a regulator of phosphatidylinositol 4-phosphate (PtdIns(4)P) synthesis. May also play a role in fasting-induced catabolism. This chain is Transmembrane protein 150A (Tmem150a), found in Mus musculus (Mouse).